The primary structure comprises 186 residues: Ribosome-recycling factor (186 aa).

Basic and acidic residues-rich tracts occupy residues 134–169 and 176–186; these read RDANKAAETAEKDKEMTEDDRDKTKDQVQELTKKAE and AKAREAEVMED. Residues 134 to 186 form a disordered region; the sequence is RDANKAAETAEKDKEMTEDDRDKTKDQVQELTKKAETNVNESAKAREAEVMED.

It belongs to the RRF family.

The protein resides in the cytoplasm. Its function is as follows. Responsible for the release of ribosomes from messenger RNA at the termination of protein biosynthesis. May increase the efficiency of translation by recycling ribosomes from one round of translation to another. This chain is Ribosome-recycling factor, found in Rhodopirellula baltica (strain DSM 10527 / NCIMB 13988 / SH1).